The chain runs to 617 residues: Vacuolar protein sorting-associated protein 33B (617 aa).

The protein belongs to the STXBP/unc-18/SEC1 family. In terms of assembly, probable core component of the class C core vacuole/endosome tethering (CORVET) complex. The common core is composed of the class C Vps proteins vps-11, vps-16 and vps-18, and which further associates with vps-8 and vps-33.2. Interacts with spe-39. Broadly expressed in somatic tissues including the pharynx, intestine, spermatheca, and in coelomocytes. Expressed in the lining of the gut lumen.

It localises to the early endosome. The protein resides in the late endosome membrane. Its subcellular location is the lysosome membrane. It is found in the cytoplasmic vesicle. The protein localises to the clathrin-coated vesicle. It localises to the recycling endosome. In terms of biological role, plays a role in vesicle-mediated protein trafficking to lysosomal compartments and in membrane docking/fusion reactions of late endosomes/lysosomes. Believed to act as a component of the putative CORVET endosomal tethering complex which is proposed to be involved in the rab-5-to-rab-7 endosome conversion probably implicating sand-1, and via binding SNAREs and SNARE complexes to mediate tethering and docking events during SNARE-mediated membrane fusion. The CORVET complex is proposed to function as a rab-5 effector to mediate early endosome fusion probably in specific endosome subpopulations. Most likely within the CORVET complex, it is involved in the fusion of endocytic compartments. Required for sperm development and function. This is Vacuolar protein sorting-associated protein 33B from Caenorhabditis elegans.